We begin with the raw amino-acid sequence, 459 residues long: ATP synthase subunit beta (459 aa).

Position 148–155 (148–155 (GGAGVGKT)) interacts with ATP.

This sequence belongs to the ATPase alpha/beta chains family. As to quaternary structure, F-type ATPases have 2 components, CF(1) - the catalytic core - and CF(0) - the membrane proton channel. CF(1) has five subunits: alpha(3), beta(3), gamma(1), delta(1), epsilon(1). CF(0) has three main subunits: a(1), b(2) and c(9-12). The alpha and beta chains form an alternating ring which encloses part of the gamma chain. CF(1) is attached to CF(0) by a central stalk formed by the gamma and epsilon chains, while a peripheral stalk is formed by the delta and b chains.

It is found in the cell inner membrane. The catalysed reaction is ATP + H2O + 4 H(+)(in) = ADP + phosphate + 5 H(+)(out). Its function is as follows. Produces ATP from ADP in the presence of a proton gradient across the membrane. The catalytic sites are hosted primarily by the beta subunits. In Ruthia magnifica subsp. Calyptogena magnifica, this protein is ATP synthase subunit beta.